The primary structure comprises 535 residues: Succinate-semialdehyde dehydrogenase, mitochondrial (535 aa).

Residues 1–47 constitute a mitochondrion transit peptide; the sequence is MATCFWLRSCGARRLGSTFPGCRLRPRAGGLVPASGPAPGPAQLRCY. Lys126 is subject to N6-acetyllysine; alternate. Lys126 is modified (N6-succinyllysine; alternate). An N6-succinyllysine mark is found at Lys135 and Lys184. Residues Arg213 and 228-231 each bind NAD(+); that span reads KPAE. Arg213 contributes to the substrate binding site. Lys265 bears the N6-acetyllysine; alternate mark. Lys265 is modified (N6-succinyllysine; alternate). 284–289 serves as a coordination point for NAD(+); that stretch reads GSTTTG. Glu306 acts as the Proton acceptor in catalysis. Residue Arg334 coordinates substrate. Cys340 acts as the Nucleophile in catalysis. A disulfide bridge connects residues Cys340 and Cys342. Lys365 is subject to N6-acetyllysine. Residue Lys402 is modified to N6-succinyllysine. Lys411 is subject to N6-acetyllysine. Ser498 contacts substrate. At Ser499 the chain carries Phosphoserine.

It belongs to the aldehyde dehydrogenase family. As to quaternary structure, homotetramer.

The protein localises to the mitochondrion. It catalyses the reaction succinate semialdehyde + NAD(+) + H2O = succinate + NADH + 2 H(+). Its pathway is amino-acid degradation; 4-aminobutanoate degradation. With respect to regulation, redox-regulated. Inhibited under oxydizing conditions. Functionally, catalyzes one step in the degradation of the inhibitory neurotransmitter gamma-aminobutyric acid (GABA). This Hylobates lar (Lar gibbon) protein is Succinate-semialdehyde dehydrogenase, mitochondrial (ALDH5A1).